Reading from the N-terminus, the 59-residue chain is Bdellastasin (59 aa).

Intrachain disulfides connect Cys10/Cys21, Cys15/Cys26, Cys28/Cys48, Cys33/Cys52, and Cys37/Cys54. In terms of domain architecture, Antistasin-like spans 28-54 (CSDLHCKVKCEHGFKKDDNGCEYACIC).

The protein resides in the secreted. Its function is as follows. Strong inhibitor of mammalian trypsin, plasmin and acrosin. This Hirudo medicinalis (Medicinal leech) protein is Bdellastasin.